We begin with the raw amino-acid sequence, 500 residues long: Cytochrome P450 2D3 (500 aa).

Residue C446 coordinates heme.

This sequence belongs to the cytochrome P450 family. Heme serves as cofactor.

It localises to the endoplasmic reticulum membrane. The protein resides in the microsome membrane. The enzyme catalyses an organic molecule + reduced [NADPH--hemoprotein reductase] + O2 = an alcohol + oxidized [NADPH--hemoprotein reductase] + H2O + H(+). Functionally, cytochromes P450 are a group of heme-thiolate monooxygenases. In liver microsomes, this enzyme is involved in an NADPH-dependent electron transport pathway. It oxidizes a variety of structurally unrelated compounds, including steroids, fatty acids, and xenobiotics. The polypeptide is Cytochrome P450 2D3 (Cyp2d3) (Rattus norvegicus (Rat)).